Reading from the N-terminus, the 874-residue chain is Leucine--tRNA ligase (874 aa).

The short motif at 43 to 53 is the 'HIGH' region element; the sequence is PYPSGRIHIGH. A 'KMSKS' region motif is present at residues 630 to 634; it reads KMSKS. Lys633 is a binding site for ATP.

The protein belongs to the class-I aminoacyl-tRNA synthetase family.

It is found in the cytoplasm. It carries out the reaction tRNA(Leu) + L-leucine + ATP = L-leucyl-tRNA(Leu) + AMP + diphosphate. The polypeptide is Leucine--tRNA ligase (Bradyrhizobium sp. (strain ORS 278)).